The primary structure comprises 234 residues: 7-cyano-7-deazaguanine synthase (234 aa).

ATP is bound at residue 15–25; it reads LSGGLDSSTCL. Residues C199, C208, C211, and C214 each coordinate Zn(2+).

It belongs to the QueC family. Zn(2+) serves as cofactor.

It carries out the reaction 7-carboxy-7-deazaguanine + NH4(+) + ATP = 7-cyano-7-deazaguanine + ADP + phosphate + H2O + H(+). The protein operates within purine metabolism; 7-cyano-7-deazaguanine biosynthesis. Catalyzes the ATP-dependent conversion of 7-carboxy-7-deazaguanine (CDG) to 7-cyano-7-deazaguanine (preQ(0)). The chain is 7-cyano-7-deazaguanine synthase from Anaeromyxobacter dehalogenans (strain 2CP-C).